The chain runs to 92 residues: UPF0335 protein BMEI0289 (92 aa).

The protein belongs to the UPF0335 family.

In Brucella melitensis biotype 1 (strain ATCC 23456 / CCUG 17765 / NCTC 10094 / 16M), this protein is UPF0335 protein BMEI0289.